Here is a 775-residue protein sequence, read N- to C-terminus: DENN domain-containing protein 1B (775 aa).

The uDENN domain occupies 14–143 (DLVLKVKCHA…YNHPVPKANT (130 aa)). A cDENN domain is found at 180-316 (GLPTIPESRN…VVSALKNKLK (137 aa)). A dDENN domain is found at 318-395 (QSTATGDGVA…DGRLAKLNAG (78 aa)). The FXDXF motif motif lies at 398-402 (FSDVF). Tyr-520 carries the phosphotyrosine modification. Residues Ser-535, Ser-536, Ser-549, and Ser-552 each carry the phosphoserine modification. Residues 566 to 575 (DLLGEILDTL) carry the Clathrin box motif. 2 disordered regions span residues 635-654 (DSAL…VSSS) and 671-706 (HLGA…KRET). Residues 639–651 (HGKHLPPSPRKRV) show a composition bias toward basic residues. Residues Ser-652 and Ser-653 each carry the phosphoserine modification. Basic and acidic residues predominate over residues 695 to 706 (QTDKGKTEKRET).

As to quaternary structure, interacts with RAB35. Interacts with clathrin heavy chain/CLTC. Interacts with components of the adapter protein complex 2 (AP-2) AP2A2 and AP2B1. Interacts with CD3E. Post-translationally, phosphorylated on serine and/or threonine, possibly regulating the guanine nucleotide exchange factor (GEF) activity. As to expression, highly expressed in dendritic and natural killer cells and at lower levels in other myeloid lineage cells and in pituitary. Significantly up-regulated in effector memory T-cells as compared with naive T-cells.

The protein localises to the cytoplasm. The protein resides in the cytosol. Its subcellular location is the cytoplasmic vesicle. It is found in the clathrin-coated vesicle. Functionally, guanine nucleotide exchange factor (GEF) for RAB35 that acts as a regulator of T-cell receptor (TCR) internalization in TH2 cells. Acts by promoting the exchange of GDP to GTP, converting inactive GDP-bound RAB35 into its active GTP-bound form. Plays a role in clathrin-mediated endocytosis. Controls cytokine production in TH2 lymphocytes by controlling the rate of TCR internalization and routing to endosomes: acts by mediating clathrin-mediated endocytosis of TCR via its interaction with the adapter protein complex 2 (AP-2) and GEF activity. Dysregulation leads to impaired TCR down-modulation and recycling, affecting cytokine production in TH2 cells. The polypeptide is DENN domain-containing protein 1B (Homo sapiens (Human)).